The chain runs to 150 residues: Large ribosomal subunit protein uL15 (150 aa).

A disordered region spans residues 12 to 43 (AKKRKKRVGCGESSGHGKTSGRGHKGQKARAG). Positions 30-39 (TSGRGHKGQK) are enriched in basic residues.

Belongs to the universal ribosomal protein uL15 family. Part of the 50S ribosomal subunit.

In terms of biological role, binds to the 23S rRNA. The polypeptide is Large ribosomal subunit protein uL15 (Methylacidiphilum infernorum (isolate V4) (Methylokorus infernorum (strain V4))).